The sequence spans 491 residues: 23S rRNA (uracil(1939)-C(5))-methyltransferase RlmD (491 aa).

A compositionally biased stretch (basic and acidic residues) spans M1 to I10. Residues M1–P28 are disordered. One can recognise a TRAM domain in the interval A18 to A81. The [4Fe-4S] cluster site is built by C94, C104, C107, and C186. S-adenosyl-L-methionine is bound by residues Q294, F323, N328, E344, N379, and D400. Residue C447 is the Nucleophile of the active site.

This sequence belongs to the class I-like SAM-binding methyltransferase superfamily. RNA M5U methyltransferase family. RlmD subfamily.

The enzyme catalyses uridine(1939) in 23S rRNA + S-adenosyl-L-methionine = 5-methyluridine(1939) in 23S rRNA + S-adenosyl-L-homocysteine + H(+). Catalyzes the formation of 5-methyl-uridine at position 1939 (m5U1939) in 23S rRNA. This chain is 23S rRNA (uracil(1939)-C(5))-methyltransferase RlmD, found in Paracidovorax citrulli (strain AAC00-1) (Acidovorax citrulli).